The primary structure comprises 934 residues: ATP-dependent RNA helicase dbp-10 (934 aa).

The disordered stretch occupies residues 21–43; it reads LFNNDSDFEDNSSKHHTKKGAVT. Residues 99 to 127 carry the Q motif motif; that stretch reads GGFQAMGLNAHLLRAITRKGFSVPTPIQR. The 173-residue stretch at 130-302 folds into the Helicase ATP-binding domain; it reads IPLILERKDV…RAGLQEPSLV (173 aa). Residue 143–150 coordinates ATP; the sequence is ARTGSGKT. Positions 250 to 253 match the DEAD box motif; that stretch reads DEAD. Disordered stretches follow at residues 343 to 370, 613 to 722, and 851 to 934; these read GPPE…NPKE, ELGP…FQDP, and GAQP…RQKR. The Helicase C-terminal domain maps to 359-513; that stretch reads KRKREYRPNP…KNPSFAADVV (155 aa). Composition is skewed to acidic residues over residues 644-654 and 662-700; these read DEDDEDVDMED and EETN…DSEM. The span at 864–926 shows a compositional bias: basic and acidic residues; it reads EKAPKDADKF…VAEKKREKNA (63 aa).

It belongs to the DEAD box helicase family. DDX54/DBP10 subfamily.

It localises to the nucleus. The protein resides in the nucleolus. The catalysed reaction is ATP + H2O = ADP + phosphate + H(+). Its function is as follows. ATP-binding RNA helicase involved in the biogenesis of 60S ribosomal subunits and is required for the normal formation of 25S and 5.8S rRNAs. The polypeptide is ATP-dependent RNA helicase dbp-10 (dbp-10) (Neurospora crassa (strain ATCC 24698 / 74-OR23-1A / CBS 708.71 / DSM 1257 / FGSC 987)).